The chain runs to 223 residues: Thiamine-phosphate synthase (223 aa).

Residues 47–51 (QLRDK) and Asn84 each bind 4-amino-2-methyl-5-(diphosphooxymethyl)pyrimidine. The Mg(2+) site is built by Asp85 and Asp104. 4-amino-2-methyl-5-(diphosphooxymethyl)pyrimidine is bound at residue Ser123. 150-152 (TPT) contributes to the 2-[(2R,5Z)-2-carboxy-4-methylthiazol-5(2H)-ylidene]ethyl phosphate binding site. Lys153 contributes to the 4-amino-2-methyl-5-(diphosphooxymethyl)pyrimidine binding site. Gly182 contributes to the 2-[(2R,5Z)-2-carboxy-4-methylthiazol-5(2H)-ylidene]ethyl phosphate binding site.

The protein belongs to the thiamine-phosphate synthase family. Requires Mg(2+) as cofactor.

It catalyses the reaction 2-[(2R,5Z)-2-carboxy-4-methylthiazol-5(2H)-ylidene]ethyl phosphate + 4-amino-2-methyl-5-(diphosphooxymethyl)pyrimidine + 2 H(+) = thiamine phosphate + CO2 + diphosphate. It carries out the reaction 2-(2-carboxy-4-methylthiazol-5-yl)ethyl phosphate + 4-amino-2-methyl-5-(diphosphooxymethyl)pyrimidine + 2 H(+) = thiamine phosphate + CO2 + diphosphate. The enzyme catalyses 4-methyl-5-(2-phosphooxyethyl)-thiazole + 4-amino-2-methyl-5-(diphosphooxymethyl)pyrimidine + H(+) = thiamine phosphate + diphosphate. Its pathway is cofactor biosynthesis; thiamine diphosphate biosynthesis; thiamine phosphate from 4-amino-2-methyl-5-diphosphomethylpyrimidine and 4-methyl-5-(2-phosphoethyl)-thiazole: step 1/1. Its function is as follows. Condenses 4-methyl-5-(beta-hydroxyethyl)thiazole monophosphate (THZ-P) and 2-methyl-4-amino-5-hydroxymethyl pyrimidine pyrophosphate (HMP-PP) to form thiamine monophosphate (TMP). The chain is Thiamine-phosphate synthase from Saccharopolyspora erythraea (strain ATCC 11635 / DSM 40517 / JCM 4748 / NBRC 13426 / NCIMB 8594 / NRRL 2338).